Here is a 470-residue protein sequence, read N- to C-terminus: Glutamate--tRNA ligase 1 (470 aa).

The 'HIGH' region signature appears at 15–25; it reads PSPTGTMHIGT. The short motif at 241-245 is the 'KMSKS' region element; that stretch reads KLSKR. Lysine 244 is an ATP binding site.

The protein belongs to the class-I aminoacyl-tRNA synthetase family. Glutamate--tRNA ligase type 1 subfamily. As to quaternary structure, monomer.

The protein resides in the cytoplasm. It carries out the reaction tRNA(Glu) + L-glutamate + ATP = L-glutamyl-tRNA(Glu) + AMP + diphosphate. Its function is as follows. Catalyzes the attachment of glutamate to tRNA(Glu) in a two-step reaction: glutamate is first activated by ATP to form Glu-AMP and then transferred to the acceptor end of tRNA(Glu). This chain is Glutamate--tRNA ligase 1, found in Jannaschia sp. (strain CCS1).